We begin with the raw amino-acid sequence, 117 residues long: Ig lambda-1 chain V region (117 aa).

The N-terminal stretch at 1–20 (MAWISLILSLLALSSGGAIS) is a signal peptide. At Gln-21 the chain carries Pyrrolidone carboxylic acid. In terms of domain architecture, Ig-like spans 21-117 (QAVVTQESAL…YFCALWYSNH (97 aa)).

In Mus musculus (Mouse), this protein is Ig lambda-1 chain V region.